Reading from the N-terminus, the 173-residue chain is Dirigent protein 8 (173 aa).

The N-terminal stretch at 1 to 22 is a signal peptide; sequence MTNLILIFAAQILLFYAVASVG. N-linked (GlcNAc...) asparagine glycosylation is found at Asn-69, Asn-90, and Asn-125.

Belongs to the plant dirigent protein family. In terms of assembly, homodimer.

The protein localises to the secreted. It is found in the extracellular space. The protein resides in the apoplast. In terms of biological role, dirigent proteins impart stereoselectivity on the phenoxy radical-coupling reaction, yielding optically active lignans from two molecules of coniferyl alcohol in the biosynthesis of lignans, flavonolignans, and alkaloids and thus plays a central role in plant secondary metabolism. This is Dirigent protein 8 (DIR8) from Arabidopsis thaliana (Mouse-ear cress).